A 263-amino-acid polypeptide reads, in one-letter code: Methylesterase 18 (263 aa).

Ser80 (acyl-ester intermediate) is an active-site residue. Residues Asp212 and His240 each act as charge relay system in the active site.

The protein belongs to the AB hydrolase superfamily. Methylesterase family.

The enzyme catalyses methyl (indol-3-yl)acetate + H2O = (indol-3-yl)acetate + methanol + H(+). It participates in plant hormone biosynthesis. Methylesterase shown to have methyl indole-3-acetic acid (MeIAA) esterase activity in vitro. The sequence is that of Methylesterase 18 from Arabidopsis thaliana (Mouse-ear cress).